Consider the following 604-residue polypeptide: Prostaglandin G/H synthase 2 (604 aa).

The first 17 residues, 1–17, serve as a signal peptide directing secretion; it reads MLARALLLCAAVALSHA. Residues 18–55 form the EGF-like domain; the sequence is ANPCCSNPCQNRGVCMTMGFDQYKCDCTRTGFYGENCS. Disulfide bonds link cysteine 21-cysteine 32, cysteine 22-cysteine 145, cysteine 26-cysteine 42, and cysteine 44-cysteine 54. Asparagine 53 is a glycosylation site (N-linked (GlcNAc...) asparagine). Position 106 (arginine 106) interacts with substrate. Asparagine 130 carries an N-linked (GlcNAc...) asparagine glycan. Histidine 193 acts as the Proton acceptor in catalysis. Tyrosine 341 provides a ligand contact to substrate. Tyrosine 371 (for cyclooxygenase activity) is an active-site residue. Histidine 374 is a binding site for heme b. Asparagine 396 is a glycosylation site (N-linked (GlcNAc...) asparagine). Residue cysteine 526 is modified to S-nitrosocysteine. A disulfide bridge connects residues cysteine 555 and cysteine 561. Position 565 is an O-acetylserine (serine 565). The N-linked (GlcNAc...) asparagine glycan is linked to asparagine 580.

It belongs to the prostaglandin G/H synthase family. In terms of assembly, homodimer. Heme b serves as cofactor. S-nitrosylation by NOS2 (iNOS) activates enzyme activity. S-nitrosylation may take place on different Cys residues in addition to Cys-526. Post-translationally, acetylated at Ser-565 by SPHK1. During neuroinflammation, acetylation by SPHK1 promotes neuronal secretion of specialized preresolving mediators (SPMs), especially 15-R-lipoxin A4, which results in an increase of phagocytic microglia. As to expression, highest expression in kidney and urinary bladder.

The protein localises to the microsome membrane. Its subcellular location is the endoplasmic reticulum membrane. It is found in the nucleus inner membrane. The protein resides in the nucleus outer membrane. It carries out the reaction (5Z,8Z,11Z,14Z)-eicosatetraenoate + AH2 + 2 O2 = prostaglandin H2 + A + H2O. The catalysed reaction is (5Z,8Z,11Z,14Z)-eicosatetraenoate + 2 O2 = prostaglandin G2. It catalyses the reaction prostaglandin G2 + AH2 = prostaglandin H2 + A + H2O. The enzyme catalyses (5Z,8Z,11Z,14Z,17Z)-eicosapentaenoate + 2 O2 = prostaglandin G3. It carries out the reaction prostaglandin G3 + AH2 = prostaglandin H3 + A + H2O. The catalysed reaction is (8Z,11Z,14Z)-eicosatrienoate + 2 O2 = prostaglandin G1. It catalyses the reaction prostaglandin G1 + AH2 = prostaglandin H1 + A + H2O. The enzyme catalyses 2-(5Z,8Z,11Z,14Z)-eicosatetraenoyl-sn-glycero-3-phosphoethanolamine + 2 O2 = 2-(prostaglandin G2)-sn-glycero-3-phosphoethanolamine. It carries out the reaction 2-(prostaglandin G2)-sn-glycero-3-phosphoethanolamine + AH2 = 2-(prostaglandin H2)-sn-glycero-3-phosphoethanolamine + A + H2O. The catalysed reaction is 2-(5Z,8Z,11Z,14Z)-eicosatetraenoyl-sn-glycero-3-phosphocholine + 2 O2 = 2-(prostaglandin G2)-sn-glycero-3-phosphocholine. It catalyses the reaction 2-(prostaglandin G2)-sn-glycero-3-phosphocholine + AH2 = 2-(prostaglandin H2)-sn-glycero-3-phosphocholine + A + H2O. The enzyme catalyses (15S)-hydroperoxy-(5Z,8Z,11Z,13E)-eicosatetraenoate + AH2 = (15S)-hydroxy-(5Z,8Z,11Z,13E)-eicosatetraenoate + A + H2O. It carries out the reaction 2-(5Z,8Z,11Z,14Z)-eicosatetraenoyl-sn-glycero-3-phosphocholine + AH2 + O2 = 2-[(15S)-hydroxy-(5Z,8Z,11Z,13E)-eicosatetraenoyl]-sn-glycero-3-phosphocholine + A + H2O. The catalysed reaction is 2-(5Z,8Z,11Z,14Z)-eicosatetraenoyl-sn-glycero-3-phosphocholine + AH2 + O2 = 2-[(15R)-hydroxy-(5Z,8Z,11Z,13E)-eicosatetraenoyl]-sn-glycero-3-phosphocholine + A + H2O. It catalyses the reaction 2-(5Z,8Z,11Z,14Z)-eicosatetraenoyl-sn-glycero-3-phosphocholine + AH2 + O2 = 2-[(11R)-hydroxy-(5Z,8Z,12E,14Z)-eicosatetraenoyl]-sn-glycero-3-phosphocholine + A + H2O. The enzyme catalyses (9Z,12Z)-octadecadienoate + AH2 + O2 = 9-hydroxy-(10E,12Z)-octadecadienoate + A + H2O. It carries out the reaction (9Z,12Z)-octadecadienoate + AH2 + O2 = 13-hydroxy-(9Z,11E)-octadecadienoate + A + H2O. The catalysed reaction is (5Z,8Z,11Z,14Z)-eicosatetraenoate + AH2 + O2 = (15R)-hydroxy-(5Z,8Z,11Z,13E)-eicosatetraenoate + A + H2O. It catalyses the reaction (5Z,8Z,11Z,14Z)-eicosatetraenoate + AH2 + O2 = (11R)-hydroxy-(5Z,8Z,12E,14Z)-eicosatetraenoate + A + H2O. The enzyme catalyses (5Z,8Z,11Z,14Z,17Z)-eicosapentaenoate + AH2 + O2 = (11R)-hydroxy-(5Z,8Z,12E,14Z,17Z)-eicosapentaenoate + A + H2O. It carries out the reaction (5Z,8Z,11Z,14Z,17Z)-eicosapentaenoate + AH2 + O2 = (18S)-hydroxy-(5Z,8Z,11Z,14Z,16E)-eicosapentaenoate + A + H2O. The catalysed reaction is (5Z,8Z,11Z,14Z,17Z)-eicosapentaenoate + AH2 + O2 = (18R)-hydroxy-(5Z,8Z,11Z,14Z,16E)-eicosapentaenoate + A + H2O. It catalyses the reaction (5Z,8Z,11Z,14Z,17Z)-eicosapentaenoate + AH2 + O2 = (15R)-hydroxy-(5Z,8Z,11Z,13E,17Z)-eicosapentaenoate + A + H2O. The enzyme catalyses (5Z,8Z,11Z,14Z,17Z)-eicosapentaenoate + AH2 + O2 = (15S)-hydroxy-(5Z,8Z,11Z,13E,17Z)-eicosapentaenoate + A + H2O. It carries out the reaction (7Z,10Z,13Z,16Z,19Z)-docosapentaenoate + AH2 + O2 = 13R-hydroxy-(7Z,10Z,14E,16Z,19Z)-docosapentaenoate + A + H2O. The catalysed reaction is (4Z,7Z,10Z,13Z,16Z,19Z)-docosahexaenoate + AH2 + O2 = 13-hydroxy-(4Z,7Z,10Z,14E,16Z,19Z)-docosahexaenoate + A + H2O. It catalyses the reaction (5S)-hydroxy-(6E,8Z,11Z,14Z)-eicosatetraenoate + AH2 + O2 = (5S,15R)-dihydroxy-(6E,8Z,11Z,13E)-eicosatetraenoate + A + H2O. The enzyme catalyses (4Z,7Z,10Z,13Z,16Z,19Z)-docosahexaenoate + AH2 + O2 = 17R-hydroxy-(4Z,7Z,10Z,13Z,15E,19Z)-docosahexaenoate + A + H2O. It carries out the reaction (5S)-hydroxy-(6E,8Z,11Z,14Z)-eicosatetraenoate + AH2 + O2 = (5S,15S)-dihydroxy-(6E,8Z,11Z,13E)-eicosatetraenoate + A + H2O. The catalysed reaction is (5S)-hydroxy-(6E,8Z,11Z,14Z)-eicosatetraenoate + AH2 + O2 = (5S,11R)-dihydroxy-(6E,8Z,12E,14Z)-eicosatetraenoate + A + H2O. It catalyses the reaction 2-(5Z,8Z,11Z,14Z-eicosatetraenoyl)-glycerol + 2 O2 = 2-glyceryl-prostaglandin G2. The enzyme catalyses 2-glyceryl-prostaglandin G2 + AH2 = 2-glyceryl-prostaglandin H2 + A + H2O. It carries out the reaction (5Z,8Z,11Z,14Z)-eicosatetraenoate + O2 = (15R)-hydroperoxy-(5Z,8Z,11Z,13E)-eicosatetraenoate. The catalysed reaction is (5Z,8Z,11Z,14Z)-eicosatetraenoate + O2 = 11R-hydroperoxy-(5Z,8Z,12E,14Z)-eicosatetraenoate. It catalyses the reaction (9Z,12Z)-octadecadienoate + AH2 + O2 = (9R)-hydroxy-(10E,12Z)-octadecadienoate + A + H2O. The enzyme catalyses (9Z,12Z)-octadecadienoate + AH2 + O2 = (9S)-hydroxy-(10E,12Z)-octadecadienoate + A + H2O. It carries out the reaction (9Z,12Z)-octadecadienoate + AH2 + O2 = (13S)-hydroxy-(9Z,11E)-octadecadienoate + A + H2O. The catalysed reaction is (9Z,12Z)-octadecadienoate + AH2 + O2 = (13R)-hydroxy-(9Z,11E)-octadecadienoate + A + H2O. The protein operates within lipid metabolism; prostaglandin biosynthesis. In terms of biological role, dual cyclooxygenase and peroxidase in the biosynthesis pathway of prostanoids, a class of C20 oxylipins mainly derived from arachidonate ((5Z,8Z,11Z,14Z)-eicosatetraenoate, AA, C20:4(n-6)), with a particular role in the inflammatory response. The cyclooxygenase activity oxygenates AA to the hydroperoxy endoperoxide prostaglandin G2 (PGG2), and the peroxidase activity reduces PGG2 to the hydroxy endoperoxide prostaglandin H2 (PGH2), the precursor of all 2-series prostaglandins and thromboxanes. This complex transformation is initiated by abstraction of hydrogen at carbon 13 (with S-stereochemistry), followed by insertion of molecular O2 to form the endoperoxide bridge between carbon 9 and 11 that defines prostaglandins. The insertion of a second molecule of O2 (bis-oxygenase activity) yields a hydroperoxy group in PGG2 that is then reduced to PGH2 by two electrons. Similarly catalyzes successive cyclooxygenation and peroxidation of dihomo-gamma-linoleate (DGLA, C20:3(n-6)) and eicosapentaenoate (EPA, C20:5(n-3)) to corresponding PGH1 and PGH3, the precursors of 1- and 3-series prostaglandins. In an alternative pathway of prostanoid biosynthesis, converts 2-arachidonoyl lysophopholipids to prostanoid lysophopholipids, which are then hydrolyzed by intracellular phospholipases to release free prostanoids. Metabolizes 2-arachidonoyl glycerol yielding the glyceryl ester of PGH2, a process that can contribute to pain response. Generates lipid mediators from n-3 and n-6 polyunsaturated fatty acids (PUFAs) via a lipoxygenase-type mechanism. Oxygenates PUFAs to hydroperoxy compounds and then reduces them to corresponding alcohols. Plays a role in the generation of resolution phase interaction products (resolvins) during both sterile and infectious inflammation. Metabolizes docosahexaenoate (DHA, C22:6(n-3)) to 17R-HDHA, a precursor of the D-series resolvins (RvDs). As a component of the biosynthetic pathway of E-series resolvins (RvEs), converts eicosapentaenoate (EPA, C20:5(n-3)) primarily to 18S-HEPE that is further metabolized by ALOX5 and LTA4H to generate 18S-RvE1 and 18S-RvE2. In vascular endothelial cells, converts docosapentaenoate (DPA, C22:5(n-3)) to 13R-HDPA, a precursor for 13-series resolvins (RvTs) shown to activate macrophage phagocytosis during bacterial infection. In activated leukocytes, contributes to oxygenation of hydroxyeicosatetraenoates (HETE) to diHETES (5,15-diHETE and 5,11-diHETE). Can also use linoleate (LA, (9Z,12Z)-octadecadienoate, C18:2(n-6)) as substrate and produce hydroxyoctadecadienoates (HODEs) in a regio- and stereospecific manner,being (9R)-HODE ((9R)-hydroxy-(10E,12Z)-octadecadienoate) and (13S)-HODE ((13S)-hydroxy-(9Z,11E)-octadecadienoate) its major products. During neuroinflammation, plays a role in neuronal secretion of specialized preresolving mediators (SPMs) 15R-lipoxin A4 that regulates phagocytic microglia. In Oryctolagus cuniculus (Rabbit), this protein is Prostaglandin G/H synthase 2 (PTGS2).